The following is a 383-amino-acid chain: MSAPGSSCTEPGPPLWLLAELTYRCPLQCPYCSNPLDFARHGAELSTAEWIEVFRQARELGAAQLGFSGGEPLVRQDLSELIGAARGLGYYTNLITSGIGLSEARIAEFATAGLDHIQVSFQAADAELNDLLAGSGKAFARKLAMARAVKAQGYPMVLNFVTHRHNIDAIERIIELCLELEADYIELATCQFYGWAELNRAGLLPTRAQLERAERITNQWREKLAAQGHPCKLIFVTPDYYEERPKACMGGWASLFLDIAPDGTALPCHNARMLPVQFPNVREHSLRHIWYDSFGFNRFRGDDWLPEPCRSCDEKGRDFGGCRCQAFLLTGDAEATDPVCAKSAHHGLILDARRQAEEAPLGLERLVHRNARTSEIICRSRSE.

The 216-residue stretch at 11-226 (PGPPLWLLAE…TNQWREKLAA (216 aa)) folds into the Radical SAM core domain. Residues cysteine 25, cysteine 29, and cysteine 32 each contribute to the [4Fe-4S] cluster site.

Belongs to the radical SAM superfamily. PqqE family. Interacts with PqqD. The interaction is necessary for activity of PqqE. It depends on [4Fe-4S] cluster as a cofactor.

It catalyses the reaction [PQQ precursor protein] + S-adenosyl-L-methionine = E-Y cross-linked-[PQQ precursor protein] + 5'-deoxyadenosine + L-methionine + H(+). It functions in the pathway cofactor biosynthesis; pyrroloquinoline quinone biosynthesis. Its function is as follows. Catalyzes the cross-linking of a glutamate residue and a tyrosine residue in the PqqA protein as part of the biosynthesis of pyrroloquinoline quinone (PQQ). This chain is PqqA peptide cyclase, found in Azotobacter vinelandii (strain DJ / ATCC BAA-1303).